The sequence spans 196 residues: Peptidyl-tRNA hydrolase (196 aa).

His15 lines the tRNA pocket. The Proton acceptor role is filled by His20. Residues Tyr66, Asn68, and Asn114 each contribute to the tRNA site.

This sequence belongs to the PTH family. In terms of assembly, monomer.

It localises to the cytoplasm. It carries out the reaction an N-acyl-L-alpha-aminoacyl-tRNA + H2O = an N-acyl-L-amino acid + a tRNA + H(+). Hydrolyzes ribosome-free peptidyl-tRNAs (with 1 or more amino acids incorporated), which drop off the ribosome during protein synthesis, or as a result of ribosome stalling. Its function is as follows. Catalyzes the release of premature peptidyl moieties from peptidyl-tRNA molecules trapped in stalled 50S ribosomal subunits, and thus maintains levels of free tRNAs and 50S ribosomes. The polypeptide is Peptidyl-tRNA hydrolase (Polynucleobacter asymbioticus (strain DSM 18221 / CIP 109841 / QLW-P1DMWA-1) (Polynucleobacter necessarius subsp. asymbioticus)).